We begin with the raw amino-acid sequence, 110 residues long: Putative UPF0377 protein YKL223W (110 aa).

This sequence belongs to the UPF0377 family.

The sequence is that of Putative UPF0377 protein YKL223W from Saccharomyces cerevisiae (strain ATCC 204508 / S288c) (Baker's yeast).